The primary structure comprises 311 residues: Metal-staphylopine import system permease protein CntB (311 aa).

The next 6 helical transmembrane spans lie at 9–29 (IALM…LTYI), 105–125 (LTII…VVSA), 139–159 (VAFF…IIYV), 173–193 (GPES…GIYF), 237–257 (IFCM…YIFA), and 274–294 (FPVI…FNTL). Residues 99 to 295 (FMNTLKLTII…VLFIVFNTLA (197 aa)) enclose the ABC transmembrane type-1 domain.

The protein belongs to the binding-protein-dependent transport system permease family. In terms of assembly, the complex is composed of two ATP-binding proteins (CntD and CntF), two transmembrane proteins (CntB and CntC) and a solute-binding protein (CntA).

Its subcellular location is the cell membrane. Its activity is regulated as follows. Nickel/cobalt import is reduced in the presence of zinc. Part of the ABC transporter complex CntABCDF (Opp1) involved in the uptake of metal in complex with the metallophore staphylopine (StP). Involved in the import of divalent metals ions such as nickel, cobalt and zinc. Probably responsible for the translocation of the substrate across the membrane. Plays a major role in nickel/cobalt import in zinc-depleted conditions. Contributes to virulence. Required for full urease activity in vitro. The sequence is that of Metal-staphylopine import system permease protein CntB from Staphylococcus aureus (strain NCTC 8325 / PS 47).